The primary structure comprises 180 residues: Large ribosomal subunit protein uL5 (180 aa).

It belongs to the universal ribosomal protein uL5 family. In terms of assembly, part of the 50S ribosomal subunit; part of the 5S rRNA/L5/L18/L25 subcomplex. Contacts the 5S rRNA and the P site tRNA. Forms a bridge to the 30S subunit in the 70S ribosome.

Functionally, this is one of the proteins that bind and probably mediate the attachment of the 5S RNA into the large ribosomal subunit, where it forms part of the central protuberance. In the 70S ribosome it contacts protein S13 of the 30S subunit (bridge B1b), connecting the 2 subunits; this bridge is implicated in subunit movement. Contacts the P site tRNA; the 5S rRNA and some of its associated proteins might help stabilize positioning of ribosome-bound tRNAs. The sequence is that of Large ribosomal subunit protein uL5 from Chlamydia caviae (strain ATCC VR-813 / DSM 19441 / 03DC25 / GPIC) (Chlamydophila caviae).